The chain runs to 448 residues: Probable glycine dehydrogenase (decarboxylating) subunit 1 (448 aa).

The protein belongs to the GcvP family. N-terminal subunit subfamily. The glycine cleavage system is composed of four proteins: P, T, L and H. In this organism, the P 'protein' is a heterodimer of two subunits.

It carries out the reaction N(6)-[(R)-lipoyl]-L-lysyl-[glycine-cleavage complex H protein] + glycine + H(+) = N(6)-[(R)-S(8)-aminomethyldihydrolipoyl]-L-lysyl-[glycine-cleavage complex H protein] + CO2. In terms of biological role, the glycine cleavage system catalyzes the degradation of glycine. The P protein binds the alpha-amino group of glycine through its pyridoxal phosphate cofactor; CO(2) is released and the remaining methylamine moiety is then transferred to the lipoamide cofactor of the H protein. In Thermomicrobium roseum (strain ATCC 27502 / DSM 5159 / P-2), this protein is Probable glycine dehydrogenase (decarboxylating) subunit 1.